The primary structure comprises 479 residues: Ribulose bisphosphate carboxylase large chain 2 (479 aa).

Asparagine 116 and threonine 166 together coordinate substrate. Lysine 168 acts as the Proton acceptor in catalysis. Lysine 170 is a binding site for substrate. Mg(2+) contacts are provided by lysine 194, aspartate 196, and glutamate 197. Lysine 194 is modified (N6-carboxylysine). Histidine 287 functions as the Proton acceptor in the catalytic mechanism. Substrate is bound by residues arginine 288, histidine 320, and serine 372.

Belongs to the RuBisCO large chain family. Type I subfamily. In terms of assembly, heterohexadecamer of 8 large chains and 8 small chains. Mg(2+) is required as a cofactor.

The catalysed reaction is 2 (2R)-3-phosphoglycerate + 2 H(+) = D-ribulose 1,5-bisphosphate + CO2 + H2O. The enzyme catalyses D-ribulose 1,5-bisphosphate + O2 = 2-phosphoglycolate + (2R)-3-phosphoglycerate + 2 H(+). Its function is as follows. RuBisCO catalyzes two reactions: the carboxylation of D-ribulose 1,5-bisphosphate, the primary event in carbon dioxide fixation, as well as the oxidative fragmentation of the pentose substrate. Both reactions occur simultaneously and in competition at the same active site. The protein is Ribulose bisphosphate carboxylase large chain 2 of Bradyrhizobium sp. (strain BTAi1 / ATCC BAA-1182).